A 205-amino-acid chain; its full sequence is SCO2-like protein RF_0960 (205 aa).

Cys82, Cys86, and His172 together coordinate Cu cation.

The protein belongs to the SCO1/2 family.

In Rickettsia felis (strain ATCC VR-1525 / URRWXCal2) (Rickettsia azadi), this protein is SCO2-like protein RF_0960.